The sequence spans 494 residues: Neuronal acetylcholine receptor subunit alpha-6 (494 aa).

A signal peptide spans M1–F25. Residues K26–L239 lie on the Extracellular side of the membrane. N-linked (GlcNAc...) asparagine glycosylation is found at N54 and N171. Intrachain disulfides connect C158–C172 and C222–C223. 3 helical membrane-spanning segments follow: residues P240 to L264, V272 to T290, and Y306 to I327. Over H328 to R465 the chain is Cytoplasmic. S401 is subject to Phosphoserine. The chain crosses the membrane as a helical span at residues V466–L484.

It belongs to the ligand-gated ion channel (TC 1.A.9) family. Acetylcholine receptor (TC 1.A.9.1) subfamily. Alpha-6/CHRNA6 sub-subfamily. As to quaternary structure, neuronal AChR is composed of two different types of subunits: alpha and non-alpha (beta). CHRNA6/alpha-6 subunit can be combined to CHRNB2/beta-2, CHRNA4/alpha-4 and CHRNB3/beta-3 to give rise to functional receptors. Heteropentamers containing CHRNB3 have an stoichiometry of (CHRNA6:CHRNB2)2:CHRNB3. Interacts with LYPD6.

Its subcellular location is the synaptic cell membrane. It catalyses the reaction Ca(2+)(in) = Ca(2+)(out). It carries out the reaction K(+)(in) = K(+)(out). The catalysed reaction is Na(+)(in) = Na(+)(out). With respect to regulation, activated by a myriad of ligands such as acetylcholine, cytisine and nicotine. CHRNA6 nAChR activity is inhibited by the antagonists alpha-conotoxin MII and PIA, a small disulfide-constrained peptides from cone snails. In terms of biological role, component of neuronal acetylcholine receptors (nAChRs) that function as pentameric, ligand-gated cation channels with high calcium permeability among other activities. nAChRs are excitatory neurotrasnmitter receptors formed by a collection of nAChR subunits known to mediate synaptic transmission in the nervous system and the neuromuscular junction. Each nAchR subunit confers differential attributes to channel properties, including activation, deactivation and desensitization kinetics, pH sensitivity, cation permeability, and binding to allosteric modulators. CHRNA6 forms pentameric channels with CHRNB2, CHRNB3 and CHRNA4 that exhibit high sensitivity to ACh and nicotine and are predominantly expressed in only a few brain areas, including dopaminergic neurons, norepirephrine neurons and cells of the visual system. nAChrs containing CHRNA6 subunits mediate endogenous cholinergic modulation of dopamine and gamma-aminobutyric acid (GABA) release in response to nicotine at nerve terminals. The chain is Neuronal acetylcholine receptor subunit alpha-6 (CHRNA6) from Pan troglodytes (Chimpanzee).